A 270-amino-acid chain; its full sequence is Methylthioribulose-1-phosphate dehydratase (270 aa).

Cysteine 122 provides a ligand contact to substrate. 2 residues coordinate Zn(2+): histidine 140 and histidine 142. The active-site Proton donor/acceptor is glutamate 165. Residue histidine 230 coordinates Zn(2+).

The protein belongs to the aldolase class II family. MtnB subfamily. Requires Zn(2+) as cofactor.

The protein localises to the cytoplasm. The catalysed reaction is 5-(methylsulfanyl)-D-ribulose 1-phosphate = 5-methylsulfanyl-2,3-dioxopentyl phosphate + H2O. The protein operates within amino-acid biosynthesis; L-methionine biosynthesis via salvage pathway; L-methionine from S-methyl-5-thio-alpha-D-ribose 1-phosphate: step 2/6. Its function is as follows. Catalyzes the dehydration of methylthioribulose-1-phosphate (MTRu-1-P) into 2,3-diketo-5-methylthiopentyl-1-phosphate (DK-MTP-1-P). This chain is Methylthioribulose-1-phosphate dehydratase, found in Candida albicans (strain WO-1) (Yeast).